The following is a 345-amino-acid chain: Uroporphyrinogen decarboxylase (345 aa).

Substrate contacts are provided by residues 26–30 (RQAGR), D76, Y151, S205, and H321.

The protein belongs to the uroporphyrinogen decarboxylase family. In terms of assembly, homodimer.

The protein resides in the cytoplasm. The catalysed reaction is uroporphyrinogen III + 4 H(+) = coproporphyrinogen III + 4 CO2. It participates in porphyrin-containing compound metabolism; protoporphyrin-IX biosynthesis; coproporphyrinogen-III from 5-aminolevulinate: step 4/4. In terms of biological role, catalyzes the decarboxylation of four acetate groups of uroporphyrinogen-III to yield coproporphyrinogen-III. This chain is Uroporphyrinogen decarboxylase, found in Phenylobacterium zucineum (strain HLK1).